A 295-amino-acid chain; its full sequence is 4-hydroxybenzoate octaprenyltransferase (295 aa).

Helical transmembrane passes span 28 to 48 (PIGI…AADG), 55 to 75 (VLIF…INDF), 103 to 123 (WALF…TDPF), 147 to 167 (LPQL…FTAA), 175 to 195 (AWLI…YYAM), 219 to 239 (AIIL…GMRL), 241 to 261 (LGPY…WEFV), and 275 to 295 (FLHN…DYGI).

It belongs to the UbiA prenyltransferase family. The cofactor is Mg(2+).

The protein localises to the cell inner membrane. The catalysed reaction is all-trans-octaprenyl diphosphate + 4-hydroxybenzoate = 4-hydroxy-3-(all-trans-octaprenyl)benzoate + diphosphate. The protein operates within cofactor biosynthesis; ubiquinone biosynthesis. Catalyzes the prenylation of para-hydroxybenzoate (PHB) with an all-trans polyprenyl group. Mediates the second step in the final reaction sequence of ubiquinone-8 (UQ-8) biosynthesis, which is the condensation of the polyisoprenoid side chain with PHB, generating the first membrane-bound Q intermediate 3-octaprenyl-4-hydroxybenzoate. The sequence is that of 4-hydroxybenzoate octaprenyltransferase from Azotobacter vinelandii (strain DJ / ATCC BAA-1303).